Reading from the N-terminus, the 72-residue chain is NAD(P)H-quinone oxidoreductase subunit O (72 aa).

The protein belongs to the complex I NdhO subunit family. In terms of assembly, NDH-1 can be composed of about 15 different subunits; different subcomplexes with different compositions have been identified which probably have different functions.

Its subcellular location is the cellular thylakoid membrane. The enzyme catalyses a plastoquinone + NADH + (n+1) H(+)(in) = a plastoquinol + NAD(+) + n H(+)(out). It catalyses the reaction a plastoquinone + NADPH + (n+1) H(+)(in) = a plastoquinol + NADP(+) + n H(+)(out). Its function is as follows. NDH-1 shuttles electrons from an unknown electron donor, via FMN and iron-sulfur (Fe-S) centers, to quinones in the respiratory and/or the photosynthetic chain. The immediate electron acceptor for the enzyme in this species is believed to be plastoquinone. Couples the redox reaction to proton translocation, and thus conserves the redox energy in a proton gradient. Cyanobacterial NDH-1 also plays a role in inorganic carbon-concentration. This chain is NAD(P)H-quinone oxidoreductase subunit O, found in Crocosphaera subtropica (strain ATCC 51142 / BH68) (Cyanothece sp. (strain ATCC 51142)).